A 136-amino-acid polypeptide reads, in one-letter code: Small ribosomal subunit protein uS8c (136 aa).

This sequence belongs to the universal ribosomal protein uS8 family. Part of the 30S ribosomal subunit.

It localises to the plastid. The protein resides in the chloroplast. In terms of biological role, one of the primary rRNA binding proteins, it binds directly to 16S rRNA central domain where it helps coordinate assembly of the platform of the 30S subunit. The chain is Small ribosomal subunit protein uS8c (rps8) from Saccharum officinarum (Sugarcane).